The primary structure comprises 285 residues: Type II restriction enzyme Cfr10I (285 aa).

Mg(2+) contacts are provided by aspartate 134 and glutamate 204.

In terms of assembly, homodimer. Requires Mg(2+) as cofactor.

It carries out the reaction Endonucleolytic cleavage of DNA to give specific double-stranded fragments with terminal 5'-phosphates.. Functionally, an F and P subtype restriction enzyme that recognizes the double-stranded sequence 5'-RCCGGY-3' and cleaves after R-1. This Citrobacter freundii protein is Type II restriction enzyme Cfr10I (cfr10IR).